Here is a 485-residue protein sequence, read N- to C-terminus: UDP-N-acetylmuramate--L-alanine ligase (485 aa).

Position 112–118 (G112–T118) interacts with ATP.

It belongs to the MurCDEF family.

The protein localises to the cytoplasm. The catalysed reaction is UDP-N-acetyl-alpha-D-muramate + L-alanine + ATP = UDP-N-acetyl-alpha-D-muramoyl-L-alanine + ADP + phosphate + H(+). The protein operates within cell wall biogenesis; peptidoglycan biosynthesis. Its function is as follows. Cell wall formation. The chain is UDP-N-acetylmuramate--L-alanine ligase from Variovorax paradoxus (strain S110).